Reading from the N-terminus, the 158-residue chain is Transcriptional regulator MraZ (158 aa).

2 consecutive SpoVT-AbrB domains span residues 7 to 54 (NIEA…PEEV) and 84 to 127 (VEII…AKER).

It belongs to the MraZ family. As to quaternary structure, forms oligomers.

The protein resides in the cytoplasm. Its subcellular location is the nucleoid. The sequence is that of Transcriptional regulator MraZ from Bacteroides fragilis (strain ATCC 25285 / DSM 2151 / CCUG 4856 / JCM 11019 / LMG 10263 / NCTC 9343 / Onslow / VPI 2553 / EN-2).